The sequence spans 328 residues: Ribosomal RNA small subunit methyltransferase C (328 aa).

This sequence belongs to the methyltransferase superfamily. RsmC family. In terms of assembly, monomer.

The protein localises to the cytoplasm. It carries out the reaction guanosine(1207) in 16S rRNA + S-adenosyl-L-methionine = N(2)-methylguanosine(1207) in 16S rRNA + S-adenosyl-L-homocysteine + H(+). Its function is as follows. Specifically methylates the guanine in position 1207 of 16S rRNA in the 30S particle. This Pasteurella multocida (strain Pm70) protein is Ribosomal RNA small subunit methyltransferase C.